We begin with the raw amino-acid sequence, 131 residues long: Small ribosomal subunit protein uS8 (131 aa).

The protein belongs to the universal ribosomal protein uS8 family. Part of the 30S ribosomal subunit. Contacts proteins S5 and S12.

Functionally, one of the primary rRNA binding proteins, it binds directly to 16S rRNA central domain where it helps coordinate assembly of the platform of the 30S subunit. This is Small ribosomal subunit protein uS8 from Campylobacter jejuni subsp. jejuni serotype O:23/36 (strain 81-176).